The primary structure comprises 397 residues: DNA-directed RNA polymerase subunit Rpo1C (397 aa).

This sequence belongs to the RNA polymerase beta' chain family. In terms of assembly, part of the RNA polymerase complex.

It localises to the cytoplasm. The catalysed reaction is RNA(n) + a ribonucleoside 5'-triphosphate = RNA(n+1) + diphosphate. Functionally, DNA-dependent RNA polymerase (RNAP) catalyzes the transcription of DNA into RNA using the four ribonucleoside triphosphates as substrates. Forms part of the jaw domain. This Methanococcus aeolicus (strain ATCC BAA-1280 / DSM 17508 / OCM 812 / Nankai-3) protein is DNA-directed RNA polymerase subunit Rpo1C.